The primary structure comprises 662 residues: Capsid protein (662 aa).

The protein belongs to the anelloviridae capsid protein family.

Its subcellular location is the virion. Self-assembles to form an icosahedral capsid with a T=1 symmetry, about 30 nm in diameter, and consisting of 60 capsid proteins. The capsid encapsulates the genomic DNA. Capsid protein is involved in attachment and entry into the host cell. The chain is Capsid protein from Homo sapiens (Human).